We begin with the raw amino-acid sequence, 197 residues long: Histone chaperone asf1b-A (197 aa).

This sequence belongs to the ASF1 family. Interacts with histone H3 and histone H4.

It localises to the nucleus. In terms of biological role, histone chaperone that facilitates histone deposition and histone exchange and removal during nucleosome assembly and disassembly. The protein is Histone chaperone asf1b-A (asf1ba) of Danio rerio (Zebrafish).